Reading from the N-terminus, the 272-residue chain is 3-methyl-2-oxobutanoate hydroxymethyltransferase (272 aa).

The Mg(2+) site is built by D43 and D82. Residues 43-44 (DS), D82, and K112 contribute to the 3-methyl-2-oxobutanoate site. E114 is a Mg(2+) binding site. E179 acts as the Proton acceptor in catalysis.

This sequence belongs to the PanB family. In terms of assembly, homodecamer; pentamer of dimers. Mg(2+) is required as a cofactor.

Its subcellular location is the cytoplasm. The enzyme catalyses 3-methyl-2-oxobutanoate + (6R)-5,10-methylene-5,6,7,8-tetrahydrofolate + H2O = 2-dehydropantoate + (6S)-5,6,7,8-tetrahydrofolate. It participates in cofactor biosynthesis; (R)-pantothenate biosynthesis; (R)-pantoate from 3-methyl-2-oxobutanoate: step 1/2. Catalyzes the reversible reaction in which hydroxymethyl group from 5,10-methylenetetrahydrofolate is transferred onto alpha-ketoisovalerate to form ketopantoate. In Staphylococcus aureus (strain bovine RF122 / ET3-1), this protein is 3-methyl-2-oxobutanoate hydroxymethyltransferase.